An 89-amino-acid polypeptide reads, in one-letter code: Small ribosomal subunit protein uS15 (89 aa).

This sequence belongs to the universal ribosomal protein uS15 family. Part of the 30S ribosomal subunit. Forms a bridge to the 50S subunit in the 70S ribosome, contacting the 23S rRNA.

One of the primary rRNA binding proteins, it binds directly to 16S rRNA where it helps nucleate assembly of the platform of the 30S subunit by binding and bridging several RNA helices of the 16S rRNA. Its function is as follows. Forms an intersubunit bridge (bridge B4) with the 23S rRNA of the 50S subunit in the ribosome. This is Small ribosomal subunit protein uS15 from Parvibaculum lavamentivorans (strain DS-1 / DSM 13023 / NCIMB 13966).